A 224-amino-acid chain; its full sequence is Transposase for insertion sequence-like element IS431mec (224 aa).

The H-T-H motif DNA-binding region spans 33–52; it reads EILRERGVNVHHSTVYRWVQ. The region spanning 73–222 is the Integrase catalytic domain; it reads WRIDETYIKI…SPCHEISIML (150 aa).

Functionally, involved in the transposition of the insertion sequence. The sequence is that of Transposase for insertion sequence-like element IS431mec (tnp) from Staphylococcus aureus (strain NCTC 8325 / PS 47).